We begin with the raw amino-acid sequence, 303 residues long: uncharacterized protein (303 aa).

Ser-63 bears the Phosphoserine mark.

It belongs to the HAD-like hydrolase superfamily.

Its subcellular location is the cytoplasm. It is found in the nucleus. This is an uncharacterized protein from Schizosaccharomyces pombe (strain 972 / ATCC 24843) (Fission yeast).